Here is a 517-residue protein sequence, read N- to C-terminus: UDP-N-acetylmuramyl-tripeptide synthetase (517 aa).

Threonine 48 lines the UDP-N-acetyl-alpha-D-muramoyl-L-alanyl-D-glutamate pocket. 125–131 contacts ATP; it reads GTKGKTT. Residues 169-170, serine 196, and arginine 204 each bind UDP-N-acetyl-alpha-D-muramoyl-L-alanyl-D-glutamate; that span reads TT. The residue at position 238 (lysine 238) is an N6-carboxylysine.

It belongs to the MurCDEF family. MurE subfamily. Carboxylation is probably crucial for Mg(2+) binding and, consequently, for the gamma-phosphate positioning of ATP.

The protein resides in the cytoplasm. The protein operates within cell wall biogenesis; peptidoglycan biosynthesis. Its function is as follows. Catalyzes the addition of an amino acid to the nucleotide precursor UDP-N-acetylmuramoyl-L-alanyl-D-glutamate (UMAG) in the biosynthesis of bacterial cell-wall peptidoglycan. This is UDP-N-acetylmuramyl-tripeptide synthetase from Bifidobacterium longum (strain NCC 2705).